A 56-amino-acid chain; its full sequence is Serine protease inhibitor Kazal-type 1 (56 aa).

One can recognise a Kazal-like domain in the interval 3 to 56; sequence LGREAKCNNNAGGCTKIYNPVCGTDGNTYPNECMLCVENQKRQMPVLIQRSGPC. Intrachain disulfides connect Cys9/Cys38, Cys16/Cys35, and Cys24/Cys56.

Its subcellular location is the secreted. Functionally, serine protease inhibitor which exhibits anti-trypsin activity. In the pancreas, protects against trypsin-catalyzed premature activation of zymogens. In terms of biological role, in the male reproductive tract, binds to sperm heads where it modulates sperm capacitance by inhibiting calcium uptake and nitrogen oxide (NO) production. The sequence is that of Serine protease inhibitor Kazal-type 1 (SPINK1) from Equus caballus (Horse).